We begin with the raw amino-acid sequence, 549 residues long: Dihydroxy-acid dehydratase (549 aa).

Aspartate 78 contacts Mg(2+). A [2Fe-2S] cluster-binding site is contributed by cysteine 119. The Mg(2+) site is built by aspartate 120 and lysine 121. Lysine 121 is subject to N6-carboxylysine. Cysteine 191 is a [2Fe-2S] cluster binding site. Position 441 (glutamate 441) interacts with Mg(2+). Serine 466 acts as the Proton acceptor in catalysis.

Belongs to the IlvD/Edd family. As to quaternary structure, homodimer. It depends on [2Fe-2S] cluster as a cofactor. Mg(2+) is required as a cofactor.

It carries out the reaction (2R)-2,3-dihydroxy-3-methylbutanoate = 3-methyl-2-oxobutanoate + H2O. It catalyses the reaction (2R,3R)-2,3-dihydroxy-3-methylpentanoate = (S)-3-methyl-2-oxopentanoate + H2O. It participates in amino-acid biosynthesis; L-isoleucine biosynthesis; L-isoleucine from 2-oxobutanoate: step 3/4. The protein operates within amino-acid biosynthesis; L-valine biosynthesis; L-valine from pyruvate: step 3/4. In terms of biological role, functions in the biosynthesis of branched-chain amino acids. Catalyzes the dehydration of (2R,3R)-2,3-dihydroxy-3-methylpentanoate (2,3-dihydroxy-3-methylvalerate) into 2-oxo-3-methylpentanoate (2-oxo-3-methylvalerate) and of (2R)-2,3-dihydroxy-3-methylbutanoate (2,3-dihydroxyisovalerate) into 2-oxo-3-methylbutanoate (2-oxoisovalerate), the penultimate precursor to L-isoleucine and L-valine, respectively. This is Dihydroxy-acid dehydratase from Methanosphaera stadtmanae (strain ATCC 43021 / DSM 3091 / JCM 11832 / MCB-3).